We begin with the raw amino-acid sequence, 195 residues long: UPF0301 protein CCNA_03506 (195 aa).

Belongs to the UPF0301 (AlgH) family.

In Caulobacter vibrioides (strain NA1000 / CB15N) (Caulobacter crescentus), this protein is UPF0301 protein CCNA_03506.